Reading from the N-terminus, the 681-residue chain is Chaperone protein htpG (681 aa).

The tract at residues 1–326 (MQKGNIGVTT…SPDIPLNVSR (326 aa)) is a; substrate-binding. The b stretch occupies residues 327–545 (SYLQSDSNVK…YMRRMKEMAN (219 aa)). The tract at residues 546–681 (IQAGMSFYGE…NFVKRSIELI (136 aa)) is c.

This sequence belongs to the heat shock protein 90 family. As to quaternary structure, homodimer.

It localises to the cytoplasm. Molecular chaperone. Has ATPase activity. The sequence is that of Chaperone protein htpG from Bacteroides fragilis (strain YCH46).